The sequence spans 608 residues: Alpha-glycerophosphate oxidase (608 aa).

Residue 21 to 49 (DLLIIGGGITGAGVALQAAASGLETGLIE) participates in FAD binding. The tract at residues 393 to 418 (SAVSKLESSTSEKHLDPSAVSRGSSL) is disordered.

This sequence belongs to the FAD-dependent glycerol-3-phosphate dehydrogenase family. Requires FAD as cofactor.

The protein localises to the cell membrane. It carries out the reaction sn-glycerol 3-phosphate + O2 = dihydroxyacetone phosphate + H2O2. The protein operates within membrane lipid metabolism; glycerophospholipid metabolism. This chain is Alpha-glycerophosphate oxidase (glpO), found in Streptococcus pneumoniae serotype 4 (strain ATCC BAA-334 / TIGR4).